Here is a 118-residue protein sequence, read N- to C-terminus: Protein TusC (118 aa).

It belongs to the DsrF/TusC family. In terms of assembly, heterohexamer, formed by a dimer of trimers. The hexameric TusBCD complex contains 2 copies each of TusB, TusC and TusD. The TusBCD complex interacts with TusE.

It localises to the cytoplasm. Part of a sulfur-relay system required for 2-thiolation of 5-methylaminomethyl-2-thiouridine (mnm(5)s(2)U) at tRNA wobble positions. The chain is Protein TusC from Salmonella gallinarum (strain 287/91 / NCTC 13346).